Here is a 730-residue protein sequence, read N- to C-terminus: Polyribonucleotide nucleotidyltransferase (730 aa).

Mg(2+) contacts are provided by Asp-494 and Asp-500. The KH domain maps to Pro-561–Ile-622. Residues Gly-642–Lys-711 enclose the S1 motif domain.

Belongs to the polyribonucleotide nucleotidyltransferase family. Mg(2+) is required as a cofactor.

It localises to the cytoplasm. It carries out the reaction RNA(n+1) + phosphate = RNA(n) + a ribonucleoside 5'-diphosphate. In terms of biological role, involved in mRNA degradation. Catalyzes the phosphorolysis of single-stranded polyribonucleotides processively in the 3'- to 5'-direction. This chain is Polyribonucleotide nucleotidyltransferase, found in Opitutus terrae (strain DSM 11246 / JCM 15787 / PB90-1).